The sequence spans 231 residues: NADH-ubiquinone oxidoreductase chain 4 (231 aa).

6 helical membrane-spanning segments follow: residues 1 to 21, 34 to 54, 63 to 85, 89 to 111, 128 to 148, and 156 to 176; these read PIAG…YGII, MFLP…LTCL, IAYS…TPWG, AMAL…NTTY, ILPM…AVPP, and LLIM…LGLS.

It belongs to the complex I subunit 4 family.

It is found in the mitochondrion membrane. The enzyme catalyses a ubiquinone + NADH + 5 H(+)(in) = a ubiquinol + NAD(+) + 4 H(+)(out). Functionally, core subunit of the mitochondrial membrane respiratory chain NADH dehydrogenase (Complex I) that is believed to belong to the minimal assembly required for catalysis. Complex I functions in the transfer of electrons from NADH to the respiratory chain. The immediate electron acceptor for the enzyme is believed to be ubiquinone. This Agkistrodon contortrix contortrix (Southern copperhead) protein is NADH-ubiquinone oxidoreductase chain 4 (MT-ND4).